A 474-amino-acid chain; its full sequence is MTKKLHIKTWGCQMNEYDSSKMADLLASTHGYQLTTIPEEADLLLLNTCSIREKAQEKVFSLLGQWKLLKEKNPQLIIGVGGCVASQEGEQLRQRAPCVDVIFGPQTLHRLPEMINHVQETNSPVVDISFPEIEKFDRLPEPRAEGPTAFVSIMEGCNKYCTFCVVPYTRGEEVSRPSDDILFEIAQLAAQGVREVNLLGQNVNAYRGATYDGDICSFAELLRLVAAIDGIDRIRFTTSHPIEFTDDIIDVYRDTPELVSFLHLPVQSGSDRILTMMKRAHTALEYKAIIRKLRQARPDIQISSDFIVGFPGETQQDFEQTMKLVADIHFDTSYSFIYSPRPGTPAADLPDNVSEEEKKQRLHILQQRISQQAMEISRKMVGTVQRVLVEGTSRKNVMELAGRTENNRVVNFEGSPDMIGKFVDVEIVNVYASSLRGILLRTEDQMDLRTHESPQSVIARTRKENEIGVGIYQP.

The 118-residue stretch at 3 to 120 (KKLHIKTWGC…LPEMINHVQE (118 aa)) folds into the MTTase N-terminal domain. [4Fe-4S] cluster-binding residues include cysteine 12, cysteine 49, cysteine 83, cysteine 157, cysteine 161, and cysteine 164. One can recognise a Radical SAM core domain in the interval 143–375 (RAEGPTAFVS…QQRISQQAME (233 aa)). The TRAM domain occupies 378–441 (RKMVGTVQRV…ASSLRGILLR (64 aa)).

This sequence belongs to the methylthiotransferase family. MiaB subfamily. As to quaternary structure, monomer. It depends on [4Fe-4S] cluster as a cofactor.

It localises to the cytoplasm. It catalyses the reaction N(6)-dimethylallyladenosine(37) in tRNA + (sulfur carrier)-SH + AH2 + 2 S-adenosyl-L-methionine = 2-methylsulfanyl-N(6)-dimethylallyladenosine(37) in tRNA + (sulfur carrier)-H + 5'-deoxyadenosine + L-methionine + A + S-adenosyl-L-homocysteine + 2 H(+). Functionally, catalyzes the methylthiolation of N6-(dimethylallyl)adenosine (i(6)A), leading to the formation of 2-methylthio-N6-(dimethylallyl)adenosine (ms(2)i(6)A) at position 37 in tRNAs that read codons beginning with uridine. The polypeptide is tRNA-2-methylthio-N(6)-dimethylallyladenosine synthase (Yersinia pseudotuberculosis serotype O:3 (strain YPIII)).